Reading from the N-terminus, the 342-residue chain is Trans-3-hydroxy-L-proline dehydratase (342 aa).

The Proton acceptor role is filled by serine 90. Substrate is bound by residues 91–92 (GS), aspartate 252, and 257–258 (GT).

Belongs to the proline racemase family.

It carries out the reaction trans-3-hydroxy-L-proline = 1-pyrroline-2-carboxylate + H2O. In terms of biological role, catalyzes the dehydration of trans-3-hydroxy-L-proline (t3LHyp) to Delta(1)-pyrroline-2-carboxylate (Pyr2C). Can also catalyze the epimerization of trans-4-hydroxy-L-proline (t4LHyp) to cis-4-hydroxy-D-proline (c4DHyp), albeit with 150-fold lower efficiency. May be involved in the degradation pathway that converts t3LHyp to L-proline, which would allow R.meliloti to grow on t3LHyp as a sole carbon source. Displays no proline racemase activity. The protein is Trans-3-hydroxy-L-proline dehydratase of Rhizobium meliloti (strain 1021) (Ensifer meliloti).